A 931-amino-acid polypeptide reads, in one-letter code: Histone-lysine N-methyltransferase EZ1 (931 aa).

Residues 1–30 are compositionally biased toward low complexity; the sequence is MEAEAAAAVVASSASASASAGRSRPSSSAA. 3 disordered regions span residues 1–37, 372–450, and 491–549; these read MEAEAAAAVVASSASASASAGRSRPSSSAAQVTSNSA, PTHS…ITNR, and RNGN…YDSS. Residues 375-385 show a composition bias toward polar residues; sequence SSDNVMNQPGS. The span at 386-398 shows a compositional bias: basic residues; sequence NRKKNGSSGRKTK. A compositionally biased stretch (polar residues) spans 423-433; that stretch reads SNKSPQHSPSP. The segment covering 500-509 has biased composition (low complexity); sequence SSQQSSPSTR. The span at 528–549 shows a compositional bias: basic and acidic residues; that stretch reads AHNDSTEEANNRHSATDGYDSS. One can recognise an SANT domain in the interval 565–615; the sequence is YLRSWKAIEQGLLVKGLEIFGRNSCLIARNLLGGMKTCKDVFQYMNYIENN. Residues 664–763 enclose the CXC domain; it reads FKRITERKDQ…TLGVPNQRGD (100 aa). The region spanning 778 to 893 is the SET domain; that stretch reads QRVLLGRSDV…AGEELFYDYR (116 aa). Residues 903-915 show a composition bias toward basic and acidic residues; it reads ARKPEASGAKDDG. The disordered stretch occupies residues 903-931; that stretch reads ARKPEASGAKDDGQPFNGRAKKLAQNNRG.

This sequence belongs to the class V-like SAM-binding methyltransferase superfamily. Histone-lysine methyltransferase family. EZ subfamily. Widely expressed.

Its subcellular location is the nucleus. It catalyses the reaction L-lysyl(27)-[histone H3] + 3 S-adenosyl-L-methionine = N(6),N(6),N(6)-trimethyl-L-lysyl(27)-[histone H3] + 3 S-adenosyl-L-homocysteine + 3 H(+). Functionally, polycomb group (PcG) protein. Catalytic subunit of some PcG multiprotein complex, which methylates 'Lys-27' of histone H3, leading to transcriptional repression of the affected target genes. PcG proteins are not required to initiate repression, but to maintain it during later stages of development. In Zea mays (Maize), this protein is Histone-lysine N-methyltransferase EZ1 (EZ1).